The following is a 310-amino-acid chain: Ribosomal RNA small subunit methyltransferase H (310 aa).

Residues 35–37 (GGH), aspartate 52, phenylalanine 79, aspartate 100, and glutamine 107 each bind S-adenosyl-L-methionine.

Belongs to the methyltransferase superfamily. RsmH family.

The protein localises to the cytoplasm. The enzyme catalyses cytidine(1402) in 16S rRNA + S-adenosyl-L-methionine = N(4)-methylcytidine(1402) in 16S rRNA + S-adenosyl-L-homocysteine + H(+). Specifically methylates the N4 position of cytidine in position 1402 (C1402) of 16S rRNA. This Anaeromyxobacter sp. (strain K) protein is Ribosomal RNA small subunit methyltransferase H.